Reading from the N-terminus, the 113-residue chain is U11-theraphotoxin-Hhn1j (113 aa).

Positions 1 to 21 (MNTVRVTFLLVFVLAVSLGQA) are cleaved as a signal peptide. A propeptide spanning residues 22 to 74 (DKDENRMEMQEKTEQGKSYLDFAENLLLQKLEELEAKLLEEDSEESRNSRQKR) is cleaved from the precursor. Residues 60–69 (LEEDSEESRN) show a composition bias toward basic and acidic residues. The interval 60–83 (LEEDSEESRNSRQKRCIGEGVPCD) is disordered. 3 cysteine pairs are disulfide-bonded: cysteine 75-cysteine 90, cysteine 82-cysteine 95, and cysteine 89-cysteine 110.

The protein belongs to the neurotoxin 14 (magi-1) family. 01 (HNTX-16) subfamily. As to expression, expressed by the venom gland.

The protein resides in the secreted. In terms of biological role, probable ion channel inhibitor. This is U11-theraphotoxin-Hhn1j from Cyriopagopus hainanus (Chinese bird spider).